The following is a 325-amino-acid chain: Tetraacyldisaccharide 4'-kinase (325 aa).

Position 54 to 61 (serine 54 to threonine 61) interacts with ATP.

Belongs to the LpxK family.

It catalyses the reaction a lipid A disaccharide + ATP = a lipid IVA + ADP + H(+). It functions in the pathway glycolipid biosynthesis; lipid IV(A) biosynthesis; lipid IV(A) from (3R)-3-hydroxytetradecanoyl-[acyl-carrier-protein] and UDP-N-acetyl-alpha-D-glucosamine: step 6/6. In terms of biological role, transfers the gamma-phosphate of ATP to the 4'-position of a tetraacyldisaccharide 1-phosphate intermediate (termed DS-1-P) to form tetraacyldisaccharide 1,4'-bis-phosphate (lipid IVA). This is Tetraacyldisaccharide 4'-kinase from Rickettsia felis (strain ATCC VR-1525 / URRWXCal2) (Rickettsia azadi).